A 967-amino-acid chain; its full sequence is Leucine--tRNA ligase (967 aa).

The short motif at 43–53 is the 'HIGH' region element; that stretch reads PYLSGHLHVGH. The short motif at 650–654 is the 'KMSKS' region element; it reads KMSKS. Residue Lys653 coordinates ATP.

The protein belongs to the class-I aminoacyl-tRNA synthetase family.

It is found in the cytoplasm. It catalyses the reaction tRNA(Leu) + L-leucine + ATP = L-leucyl-tRNA(Leu) + AMP + diphosphate. The chain is Leucine--tRNA ligase from Thermococcus onnurineus (strain NA1).